The sequence spans 501 residues: Glycerol kinase (501 aa).

Residue threonine 16 coordinates ADP. ATP-binding residues include threonine 16, threonine 17, and serine 18. Threonine 16 is a sn-glycerol 3-phosphate binding site. Arginine 20 is an ADP binding site. Positions 84, 85, 135, and 242 each coordinate sn-glycerol 3-phosphate. The glycerol site is built by arginine 84, glutamate 85, tyrosine 135, aspartate 242, and glutamine 243. ADP is bound by residues threonine 264 and glycine 307. Residues threonine 264, glycine 307, glutamine 311, and glycine 408 each coordinate ATP. Residue glycine 408 coordinates ADP.

Belongs to the FGGY kinase family.

The catalysed reaction is glycerol + ATP = sn-glycerol 3-phosphate + ADP + H(+). It functions in the pathway polyol metabolism; glycerol degradation via glycerol kinase pathway; sn-glycerol 3-phosphate from glycerol: step 1/1. Its function is as follows. Key enzyme in the regulation of glycerol uptake and metabolism. Catalyzes the phosphorylation of glycerol to yield sn-glycerol 3-phosphate. The polypeptide is Glycerol kinase (Saccharolobus islandicus (strain M.14.25 / Kamchatka #1) (Sulfolobus islandicus)).